Reading from the N-terminus, the 239-residue chain is MGTNIHIDMVIHGKHTAEIRKMFNRVAQAYDRTNLVLSFLQDAHWRRAACKMLGVTAGEEVLDVGAGTGASTRTVARTGAAVTGIDISPRMLQIARNRCKRFQNITWRLTNGDLPFPDKSFDAILMVFCLRNVSNIQGFLCDAARVLKPGGRLVVCEFSHPRRFVAPFYRLYLRYVLPRLAKLISSDPAAYEYLTESIEDWYEVDELAFMLEQCGFQNTSWKRLSFGAVALHRALRGPE.

S-adenosyl-L-methionine is bound by residues Thr68, Asp86, and 111–112 (NG).

It belongs to the class I-like SAM-binding methyltransferase superfamily. MenG/UbiE family.

It carries out the reaction a 2-demethylmenaquinol + S-adenosyl-L-methionine = a menaquinol + S-adenosyl-L-homocysteine + H(+). It functions in the pathway quinol/quinone metabolism; menaquinone biosynthesis; menaquinol from 1,4-dihydroxy-2-naphthoate: step 2/2. Methyltransferase required for the conversion of demethylmenaquinol (DMKH2) to menaquinol (MKH2). The polypeptide is Demethylmenaquinone methyltransferase (Tropheryma whipplei (strain TW08/27) (Whipple's bacillus)).